Here is a 405-residue protein sequence, read N- to C-terminus: Cytochrome P450 107B1 (405 aa).

Heme is bound at residue C352.

It belongs to the cytochrome P450 family. Requires heme as cofactor.

It is found in the cytoplasm. In terms of biological role, not known, probably involved in the catabolism of octane and guaiacol. It displays a weak activity in the O-dealkylation of 7-ethoxycoumarin. This Saccharopolyspora erythraea (strain ATCC 11635 / DSM 40517 / JCM 4748 / NBRC 13426 / NCIMB 8594 / NRRL 2338) protein is Cytochrome P450 107B1 (cyp107B1).